The sequence spans 100 residues: Urease subunit gamma (100 aa).

The protein belongs to the urease gamma subunit family. Heterotrimer of UreA (gamma), UreB (beta) and UreC (alpha) subunits. Three heterotrimers associate to form the active enzyme.

The protein resides in the cytoplasm. The enzyme catalyses urea + 2 H2O + H(+) = hydrogencarbonate + 2 NH4(+). The protein operates within nitrogen metabolism; urea degradation; CO(2) and NH(3) from urea (urease route): step 1/1. In Staphylococcus epidermidis (strain ATCC 35984 / DSM 28319 / BCRC 17069 / CCUG 31568 / BM 3577 / RP62A), this protein is Urease subunit gamma.